A 234-amino-acid chain; its full sequence is MNSTPDTFQRPALRELTPLEARVLGVLIEKQHTVPDTYPLSLNALTAGCNQKTARSPVMNVSEAEVLTAIDGLKRLSLASEGSSSRVPRFEHNMNRVLGIPSQAAALLTMLLLRGPQTAAELRLNSARLHGFADISSVEAFLDELAARTPPLVVKLPRAPGARESRWMHLMCGDVAPDEAPAHGAHEDAVPPSEFEALKAEQKALTAELAQLRALVEYMANELGIDVGKLTRGV.

It belongs to the UPF0502 family.

The polypeptide is UPF0502 protein BPSS1373 (Burkholderia pseudomallei (strain K96243)).